The following is a 488-amino-acid chain: Inosine-5'-monophosphate dehydrogenase (488 aa).

CBS domains lie at 95-153 and 157-213; these read VITN…SIKI and MTKE…PHAA. NAD(+) is bound by residues D250 and 300–302; that span reads GIG. K(+) is bound by residues G302 and G304. Residue S305 participates in IMP binding. C307 is a binding site for K(+). C307 functions as the Thioimidate intermediate in the catalytic mechanism. IMP-binding positions include 340 to 342, 363 to 364, and 387 to 391; these read DGG, GS, and YRGMG. The active-site Proton acceptor is R403. Position 417 (E417) interacts with IMP. The segment at 467-488 is disordered; sequence AGLAESHPHNVQITKESPNYSF. Positions 471, 472, and 473 each coordinate K(+). Polar residues predominate over residues 475–488; that stretch reads HNVQITKESPNYSF.

The protein belongs to the IMPDH/GMPR family. In terms of assembly, homotetramer. K(+) is required as a cofactor.

The catalysed reaction is IMP + NAD(+) + H2O = XMP + NADH + H(+). Its pathway is purine metabolism; XMP biosynthesis via de novo pathway; XMP from IMP: step 1/1. Mycophenolic acid (MPA) is a non-competitive inhibitor that prevents formation of the closed enzyme conformation by binding to the same site as the amobile flap. In contrast, mizoribine monophosphate (MZP) is a competitive inhibitor that induces the closed conformation. MPA is a potent inhibitor of mammalian IMPDHs but a poor inhibitor of the bacterial enzymes. MZP is a more potent inhibitor of bacterial IMPDH. Functionally, catalyzes the conversion of inosine 5'-phosphate (IMP) to xanthosine 5'-phosphate (XMP), the first committed and rate-limiting step in the de novo synthesis of guanine nucleotides, and therefore plays an important role in the regulation of cell growth. In Staphylococcus haemolyticus (strain JCSC1435), this protein is Inosine-5'-monophosphate dehydrogenase.